The following is a 395-amino-acid chain: Ribose-phosphate pyrophosphokinase 2, chloroplastic (395 aa).

Residues 1–23 (MASPAPRSLSSSSSSSSSSFCPS) show a composition bias toward low complexity. The interval 1–33 (MASPAPRSLSSSSSSSSSSFCPSISPPPRSPSR) is disordered. The N-terminal 42 residues, 1-42 (MASPAPRSLSSSSSSSSSSFCPSISPPPRSPSRASLPFSVKC), are a transit peptide targeting the chloroplast. Mg(2+) is bound by residues Asp209, His211, Asp220, and Asp224. The tract at residues 295–310 (GKVAVMLDDMIDTAGT) is binding of phosphoribosylpyrophosphate.

This sequence belongs to the ribose-phosphate pyrophosphokinase family.

It localises to the plastid. It is found in the chloroplast. It catalyses the reaction D-ribose 5-phosphate + ATP = 5-phospho-alpha-D-ribose 1-diphosphate + AMP + H(+). This Spinacia oleracea (Spinach) protein is Ribose-phosphate pyrophosphokinase 2, chloroplastic (PRS2).